We begin with the raw amino-acid sequence, 138 residues long: Large ribosomal subunit protein uL14 (138 aa).

It belongs to the universal ribosomal protein uL14 family. In terms of assembly, part of the 50S ribosomal subunit. Forms a cluster with proteins L3 and L24e, part of which may contact the 16S rRNA in 2 intersubunit bridges.

Its function is as follows. Binds to 23S rRNA. Forms part of two intersubunit bridges in the 70S ribosome. This Metallosphaera sedula (strain ATCC 51363 / DSM 5348 / JCM 9185 / NBRC 15509 / TH2) protein is Large ribosomal subunit protein uL14.